The sequence spans 131 residues: Cyclin-dependent kinase 4 inhibitor B (131 aa).

ANK repeat units follow at residues 6-35 (GGDA…DPNR), 39-67 (FGRR…DPNC), 72-101 (TLTR…RLDV), and 105-131 (WGRL…TAGD).

This sequence belongs to the CDKN2 cyclin-dependent kinase inhibitor family. In terms of assembly, heterodimer of CDKN2B with CDK4 or CDK6.

Functionally, interacts strongly with CDK4 and CDK6. Potent inhibitor. Potential effector of TGF-beta induced cell cycle arrest. This Bos taurus (Bovine) protein is Cyclin-dependent kinase 4 inhibitor B (CDKN2B).